The sequence spans 220 residues: Methylamine utilization ferredoxin-type protein MauM (220 aa).

4Fe-4S ferredoxin-type domains are found at residues 50 to 80 (ALPEDDFLAACVRCGLCVRACPYDTLRLAEM) and 88 to 120 (TPFFVARETPCFMCTDVPCAKACPTGALDRDIP). Residues C60, C63, C66, C70, C98, C101, C106, C110, C138, C146, C149, C153, C182, C185, C188, and C192 each coordinate [4Fe-4S] cluster. Residues 173-204 (VIPTVHSDKCTGCGTCEKHCVLGQAAIRVLPR) enclose the 4Fe-4S ferredoxin-type 3 domain.

The protein operates within one-carbon metabolism; methylamine degradation. In terms of biological role, involved in electron transfer. This Methylorubrum extorquens (strain ATCC 14718 / DSM 1338 / JCM 2805 / NCIMB 9133 / AM1) (Methylobacterium extorquens) protein is Methylamine utilization ferredoxin-type protein MauM (mauM).